Reading from the N-terminus, the 418-residue chain is Imidazolonepropionase (418 aa).

Fe(3+)-binding residues include His-80 and His-82. Positions 80 and 82 each coordinate Zn(2+). 4-imidazolone-5-propanoate is bound by residues Arg-89, Tyr-152, and His-185. Tyr-152 lines the N-formimidoyl-L-glutamate pocket. His-250 provides a ligand contact to Fe(3+). A Zn(2+)-binding site is contributed by His-250. Gln-253 provides a ligand contact to 4-imidazolone-5-propanoate. Asp-325 is a Fe(3+) binding site. Residue Asp-325 coordinates Zn(2+). N-formimidoyl-L-glutamate-binding residues include Asn-327 and Gly-329. Residue Ser-330 coordinates 4-imidazolone-5-propanoate.

This sequence belongs to the metallo-dependent hydrolases superfamily. HutI family. Zn(2+) serves as cofactor. Requires Fe(3+) as cofactor.

The protein localises to the cytoplasm. It catalyses the reaction 4-imidazolone-5-propanoate + H2O = N-formimidoyl-L-glutamate. Its pathway is amino-acid degradation; L-histidine degradation into L-glutamate; N-formimidoyl-L-glutamate from L-histidine: step 3/3. Catalyzes the hydrolytic cleavage of the carbon-nitrogen bond in imidazolone-5-propanoate to yield N-formimidoyl-L-glutamate. It is the third step in the universal histidine degradation pathway. This chain is Imidazolonepropionase, found in Solibacter usitatus (strain Ellin6076).